Here is a 403-residue protein sequence, read N- to C-terminus: Phosphoglycerate kinase (403 aa).

Substrate is bound by residues 21–23 (DFN), arginine 36, 59–62 (HLGR), arginine 119, and arginine 159. Residues lysine 214, glycine 301, glutamate 332, and 359–362 (GGDS) each bind ATP.

This sequence belongs to the phosphoglycerate kinase family. As to quaternary structure, monomer.

The protein localises to the cytoplasm. It catalyses the reaction (2R)-3-phosphoglycerate + ATP = (2R)-3-phospho-glyceroyl phosphate + ADP. It functions in the pathway carbohydrate degradation; glycolysis; pyruvate from D-glyceraldehyde 3-phosphate: step 2/5. This chain is Phosphoglycerate kinase, found in Lactobacillus acidophilus (strain ATCC 700396 / NCK56 / N2 / NCFM).